The chain runs to 154 residues: RING finger protein 11 (154 aa).

The segment covering 1-12 (MGNCLKSPTSDD) has biased composition (polar residues). The tract at residues 1–52 (MGNCLKSPTSDDISLLHESQSDRASFGEGTEPDQEPPPPYQEQVPVPIYHPT) is disordered. Glycine 2 carries the N-myristoyl glycine lipid modification. Cysteine 4 is lipidated: S-palmitoyl cysteine. Serine 14 and serine 25 each carry phosphoserine. The PPxY motif signature appears at 37 to 40 (PPPY). An RING-type zinc finger spans residues 99-140 (CVICMMDFVYGDPIRFLPCMHIYHLDCIDDWLMRSFTCPSCM). Threonine 135 is subject to Phosphothreonine; by PKB/AKT1.

In terms of assembly, interacts (when phosphorylated) with 14-3-3. Interacts with the E3 ubiquitin-ligases NEDD4, ITCH, SMURF2 and WWP1. Also interacts with the E2 ubiquitin-conjugating enzymes UBE2D1 and UBE2N, but neither with CDC34, nor with UBE2L3. Interacts with ZNF350, EPS15 and STAMBP. After TNF stimulation, interacts with TAX1BP1, TNFAIP3 and RIPK1; these interactions are transient and they are lost after 1 hour of stimulation with TNF. Interacts with GGA1. Post-translationally, ubiquitinated in the presence of ITCH, SMURF2 and UBE2D1, as well as WWP1. In terms of processing, phosphorylation by PKB/AKT1 may accelerate degradation by the proteasome. Acylation at both Gly-2 and Cys-4 is required for proper localization to the endosomes.

The protein localises to the early endosome. It is found in the recycling endosome. It localises to the cytoplasm. Its subcellular location is the nucleus. In terms of biological role, essential component of a ubiquitin-editing protein complex, comprising also TNFAIP3, ITCH and TAX1BP1, that ensures the transient nature of inflammatory signaling pathways. Promotes the association of TNFAIP3 to RIPK1 after TNF stimulation. TNFAIP3 deubiquitinates 'Lys-63' polyubiquitin chains on RIPK1 and catalyzes the formation of 'Lys-48'-polyubiquitin chains. This leads to RIPK1 proteasomal degradation and consequently termination of the TNF- or LPS-mediated activation of NF-kappa-B. Recruits STAMBP to the E3 ubiquitin-ligase SMURF2 for ubiquitination, leading to its degradation by the 26S proteasome. The chain is RING finger protein 11 (Rnf11) from Mus musculus (Mouse).